The chain runs to 465 residues: Argininosuccinate lyase (465 aa).

It belongs to the lyase 1 family. Argininosuccinate lyase subfamily.

It is found in the cytoplasm. The catalysed reaction is 2-(N(omega)-L-arginino)succinate = fumarate + L-arginine. Its pathway is amino-acid biosynthesis; L-arginine biosynthesis; L-arginine from L-ornithine and carbamoyl phosphate: step 3/3. The sequence is that of Argininosuccinate lyase from Deinococcus geothermalis (strain DSM 11300 / CIP 105573 / AG-3a).